Reading from the N-terminus, the 210-residue chain is DNA-directed RNA polymerases I, II, and III subunit RPABC1 (210 aa).

M1 is modified (N-acetylmethionine). A Glycyl lysine isopeptide (Lys-Gly) (interchain with G-Cter in SUMO2) cross-link involves residue K81.

Belongs to the archaeal Rpo5/eukaryotic RPB5 RNA polymerase subunit family. In terms of assembly, component of the RNA polymerase I (Pol I), RNA polymerase II (Pol II) and RNA polymerase III (Pol III) complexes consisting of at least 13, 12 and 17 subunits, respectively. Pol I complex consists of a ten-subunit catalytic core composed of POLR1A/RPA1, POLR1B/RPA2, POLR1C/RPAC1, POLR1D/RPAC2, POLR1H/RPA12, POLR2E/RPABC1, POLR2F/RPABC2, POLR2H/RPABC3, POLR2K/RPABC4 and POLR2L/RPABC5; a mobile stalk subunit POLR1F/RPA43 protruding from the core and additional subunits homologous to general transcription factors POLR1E/RPA49 and POLR1G/RPA34. Part of Pol I pre-initiation complex (PIC), in which Pol I core assembles with RRN3 and promoter-bound UTBF and SL1/TIF-IB complex. Pol II complex contains a ten-subunit catalytic core composed of POLR2A/RPB1, POLR2B/RPB2, POLR2C/RPB3, POLR2I/RPB9, POLR2J/RPB11, POLR2E/RPABC1, POLR2F/RPABC2, POLR2H/RPABC3, POLR2K/RPABC4 and POLR2L/RPABC5 and a mobile stalk composed of two subunits POLR2D/RPB4 and POLR2G/RPB7. Part of Pol II(G) complex, in which Pol II core associates with an additional subunit POLR2M; unlike conventional Pol II, Pol II(G) functions as a transcriptional repressor. Part of TBP-based Pol II pre-initiation complex (PIC), in which Pol II core assembles with general transcription factors and other specific initiation factors including GTF2E1, GTF2E2, GTF2F1, GTF2F2, TCEA1, ERCC2, ERCC3, GTF2H2, GTF2H3, GTF2H4, GTF2H5, GTF2A1, GTF2A2, GTF2B and TBP; this large multi-subunit PIC complex mediates DNA unwinding and targets Pol II core to the transcription start site where the first phosphodiester bond forms. In Pol II complex, this subunit is present in 2-fold molar excess over the other subunits. Pol III complex consists of a ten-subunit catalytic core composed of POLR3A/RPC1, POLR3B/RPC2, POLR1C/RPAC1, POLR1D/RPAC2, POLR3K/RPC10, POLR2E/RPABC1, POLR2F/RPABC2, POLR2H/RPABC3, POLR2K/RPABC4 and POLR2L/RPABC5; a mobile stalk composed of two subunits POLR3H/RPC8 and CRCP/RPC9, protruding from the core and functioning primarily in transcription initiation; and additional subunits homologous to general transcription factors of the RNA polymerase II machinery, POLR3C/RPC3-POLR3F/RPC6-POLR3G/RPC7 heterotrimer required for transcription initiation and POLR3D/RPC4-POLR3E/RPC5 heterodimer involved in both transcription initiation and termination. Component of the PAQosome complex which is responsible for the biogenesis of several protein complexes and which consists of R2TP complex members RUVBL1, RUVBL2, RPAP3 and PIH1D1, URI complex members PFDN2, PFDN6, PDRG1, UXT and URI1 as well as ASDURF, POLR2E and DNAAF10/WDR92. Interacts with URI1.

The protein localises to the nucleus. It is found in the nucleolus. DNA-dependent RNA polymerase catalyzes the transcription of DNA into RNA using the four ribonucleoside triphosphates as substrates. Common component of RNA polymerases I, II and III which synthesize ribosomal RNA precursors, mRNA precursors and many functional non-coding RNAs, and small RNAs, such as 5S rRNA and tRNAs, respectively. Pol II is the central component of the basal RNA polymerase II transcription machinery. Pols are composed of mobile elements that move relative to each other. In Pol II, POLR2E/RPABC1 is part of the lower jaw surrounding the central large cleft and thought to grab the incoming DNA template. Seems to be the major component in this process. The sequence is that of DNA-directed RNA polymerases I, II, and III subunit RPABC1 from Mus musculus (Mouse).